Here is a 111-residue protein sequence, read N- to C-terminus: Carboxysome shell protein CcmK1 (111 aa).

One can recognise a BMC domain in the interval 4-90; sequence AVGMIETLGF…PHENLEYVLP (87 aa).

Belongs to the bacterial microcompartments protein family. CcmK subfamily. As to quaternary structure, homohexamer. Interacts with full-length CcmM. Forms mixed heterohexamers of all possible stoichiometries with CcmK2, which might form dodecamers. Only very weak interactions with CcmK3 and CcmK4 were seen. Interacts with CcmN and CcmO in the carboxysome.

The protein resides in the carboxysome. Functionally, one of the shell proteins of the carboxysome, a polyhedral inclusion where RuBisCO (ribulose bisphosphate carboxylase, rbcL-rbcS) is sequestered. Assembles into hexamers which make sheets that form the facets of the polyhedral carboxysome. The hexamer central pore probably regulates metabolite flux. Probably the major shell protein of the carboxysome, a polyhedral inclusion where RuBisCO (ribulose bisphosphate carboxylase, rbcL-rbcS) is sequestered. The central pore probably regulates metabolite flux. Hexamers make sheets that form the facets of the carboxysome. This is Carboxysome shell protein CcmK1 from Synechocystis sp. (strain ATCC 27184 / PCC 6803 / Kazusa).